The sequence spans 928 residues: Interphotoreceptor matrix proteoglycan 1 (928 aa).

An N-terminal signal peptide occupies residues 1 to 20 (MHLKTGLIFLAICLALQVQG). The segment at 26 to 50 (SKTNHGEAKQLADASGSDKTERTTK) is disordered. A compositionally biased stretch (basic and acidic residues) spans 29–49 (NHGEAKQLADASGSDKTERTT). The N-linked (GlcNAc...) asparagine glycan is linked to Asn-143. A compositionally biased stretch (basic and acidic residues) spans 164–182 (QERKDEISTDKTGGKKLED). Positions 164 to 191 (QERKDEISTDKTGGKKLEDIPSVSTGPP) are disordered. N-linked (GlcNAc...) asparagine glycosylation is found at Asn-203 and Asn-212. An SEA 1 domain is found at 231–356 (AEQMVEFSVT…TKLTVTDLQQ (126 aa)). Disordered regions lie at residues 441–481 (LSRE…TEDI) and 494–522 (ALVS…NDLI). Over residues 466 to 477 (PSREPPHDRSPD) the composition is skewed to basic and acidic residues. Positions 735–848 (KELVVFFSLR…YSLDIEPADQ (114 aa)) constitute an SEA 2 domain. N-linked (GlcNAc...) asparagine glycosylation is found at Asn-756 and Asn-780. Positions 785 to 793 (KQLEILNFR) match the Heparin- and hyaluronan-binding motif. Residues Asn-794 and Asn-812 are each glycosylated (N-linked (GlcNAc...) asparagine).

In terms of processing, highly glycosylated (N- and O-linked carbohydrates and sialic acid). As to expression, abundantly expressed in the retina (at protein level). Localizes to the photoreceptor layer of the interphotoreceptor matrix of the retina (at protein level).

The protein resides in the cell projection. The protein localises to the cilium. It is found in the photoreceptor outer segment. Its subcellular location is the secreted. It localises to the extracellular space. The protein resides in the extracellular matrix. The protein localises to the interphotoreceptor matrix. It is found in the photoreceptor inner segment. Chondroitin sulfate-, heparin- and hyaluronan-binding protein. May serve to form a basic macromolecular scaffold comprising the insoluble interphotoreceptor matrix. In Gallus gallus (Chicken), this protein is Interphotoreceptor matrix proteoglycan 1.